We begin with the raw amino-acid sequence, 560 residues long: Alpha-farnesene synthase (560 aa).

Positions 308, 312, and 462 each coordinate Mg(2+). A DDXXD motif motif is present at residues 308–312 (DDIYD).

The protein belongs to the terpene synthase family. Tpsa subfamily. The cofactor is Mg(2+). As to expression, expressed in the rind tissues of ripe fruits.

It is found in the cytoplasm. The enzyme catalyses (2E,6E)-farnesyl diphosphate = (3E,6E)-alpha-farnesene + diphosphate. The protein operates within secondary metabolite biosynthesis; terpenoid biosynthesis. In terms of biological role, sesquiterpene synthase producing exclusively alpha-farnesene. Associated with the production of sesquiterpenes responsible for the aroma of the fruit. The polypeptide is Alpha-farnesene synthase (Cucumis melo (Muskmelon)).